The sequence spans 255 residues: Triosephosphate isomerase (255 aa).

Substrate is bound at residue 9–11; the sequence is NWK. The active-site Electrophile is His-95. Glu-167 acts as the Proton acceptor in catalysis. Residues Gly-173, Ser-212, and 233-234 each bind substrate; that span reads GG.

Belongs to the triosephosphate isomerase family. Homodimer.

Its subcellular location is the cytoplasm. It carries out the reaction D-glyceraldehyde 3-phosphate = dihydroxyacetone phosphate. It participates in carbohydrate biosynthesis; gluconeogenesis. The protein operates within carbohydrate degradation; glycolysis; D-glyceraldehyde 3-phosphate from glycerone phosphate: step 1/1. In terms of biological role, involved in the gluconeogenesis. Catalyzes stereospecifically the conversion of dihydroxyacetone phosphate (DHAP) to D-glyceraldehyde-3-phosphate (G3P). In Salmonella dublin (strain CT_02021853), this protein is Triosephosphate isomerase.